Here is a 511-residue protein sequence, read N- to C-terminus: Histidine ammonia-lyase (511 aa).

The 5-imidazolinone (Ala-Gly) cross-link spans 142–144 (ASG). S143 is modified (2,3-didehydroalanine (Ser)).

This sequence belongs to the PAL/histidase family. Contains an active site 4-methylidene-imidazol-5-one (MIO), which is formed autocatalytically by cyclization and dehydration of residues Ala-Ser-Gly.

Its subcellular location is the cytoplasm. The enzyme catalyses L-histidine = trans-urocanate + NH4(+). It participates in amino-acid degradation; L-histidine degradation into L-glutamate; N-formimidoyl-L-glutamate from L-histidine: step 1/3. This Rhizobium rhizogenes (strain K84 / ATCC BAA-868) (Agrobacterium radiobacter) protein is Histidine ammonia-lyase.